Consider the following 258-residue polypeptide: 5'-nucleotidase SurE (258 aa).

Asp18, Asp19, Ser49, and Asn102 together coordinate a divalent metal cation.

It belongs to the SurE nucleotidase family. The cofactor is a divalent metal cation.

It localises to the cytoplasm. It catalyses the reaction a ribonucleoside 5'-phosphate + H2O = a ribonucleoside + phosphate. Functionally, nucleotidase that shows phosphatase activity on nucleoside 5'-monophosphates. The sequence is that of 5'-nucleotidase SurE from Vibrio parahaemolyticus serotype O3:K6 (strain RIMD 2210633).